Reading from the N-terminus, the 322-residue chain is Probable 2-oxoglutarate-dependent dioxygenase AOP1 (322 aa).

Residues 165–271 form the Fe2OG dioxygenase domain; it reads TYYLTRLMKY…RYSTGLFSIP (107 aa). Fe cation-binding residues include His-195, Asp-197, and His-252. Arg-262 provides a ligand contact to 2-oxoglutarate.

It belongs to the iron/ascorbate-dependent oxidoreductase family. Requires Fe(2+) as cofactor.

Its function is as follows. Probable 2-oxoglutarate-dependent dioxygenase that may be involved in glucosinolates biosynthesis. May play a role in the production of aliphatic glucosinolates. The chain is Probable 2-oxoglutarate-dependent dioxygenase AOP1 (AOP1) from Arabidopsis thaliana (Mouse-ear cress).